The following is a 148-amino-acid chain: UPF0179 protein UNCMA_27840 (148 aa).

The protein belongs to the UPF0179 family.

The chain is UPF0179 protein UNCMA_27840 from Methanocella arvoryzae (strain DSM 22066 / NBRC 105507 / MRE50).